The primary structure comprises 258 residues: Regulatory protein RecX (258 aa).

This sequence belongs to the RecX family.

The protein resides in the cytoplasm. In terms of biological role, modulates RecA activity. This Streptococcus pneumoniae serotype 19F (strain G54) protein is Regulatory protein RecX.